A 531-amino-acid chain; its full sequence is O-phosphoserine--tRNA(Cys) ligase (531 aa).

Residues 189 to 191 (HMT), 234 to 236 (SAS), 276 to 277 (YY), and Asn319 each bind substrate.

The protein belongs to the class-II aminoacyl-tRNA synthetase family. O-phosphoseryl-tRNA(Cys) synthetase subfamily. In terms of assembly, homotetramer. Interacts with SepCysS.

It carries out the reaction tRNA(Cys) + O-phospho-L-serine + ATP = O-phospho-L-seryl-tRNA(Cys) + AMP + diphosphate. Its function is as follows. Catalyzes the attachment of O-phosphoserine (Sep) to tRNA(Cys). In Methanoculleus marisnigri (strain ATCC 35101 / DSM 1498 / JR1), this protein is O-phosphoserine--tRNA(Cys) ligase.